The primary structure comprises 63 residues: Cysteine-rich venom protein 3 (63 aa).

Positions 1 to 25 are cleaved as a signal peptide; sequence MRKPITLILVVALALVLLATSEVSA. 3 disulfide bridges follow: Cys-29–Cys-43, Cys-36–Cys-48, and Cys-42–Cys-58.

Expressed by the venom gland.

The protein localises to the secreted. The protein is Cysteine-rich venom protein 3 of Pimpla hypochondriaca (Parasitoid wasp).